The sequence spans 309 residues: Porphobilinogen deaminase (309 aa).

Residue Cys242 is modified to S-(dipyrrolylmethanemethyl)cysteine.

Belongs to the HMBS family. Monomer. It depends on dipyrromethane as a cofactor.

The catalysed reaction is 4 porphobilinogen + H2O = hydroxymethylbilane + 4 NH4(+). The protein operates within porphyrin-containing compound metabolism; protoporphyrin-IX biosynthesis; coproporphyrinogen-III from 5-aminolevulinate: step 2/4. Its function is as follows. Tetrapolymerization of the monopyrrole PBG into the hydroxymethylbilane pre-uroporphyrinogen in several discrete steps. In Shewanella frigidimarina (strain NCIMB 400), this protein is Porphobilinogen deaminase.